The sequence spans 159 residues: Phosphopantetheine adenylyltransferase (159 aa).

Residue Thr-10 coordinates substrate. ATP is bound by residues 10 to 11 and His-18; that span reads TF. Positions 42, 74, and 88 each coordinate substrate. ATP contacts are provided by residues 89 to 91, Glu-99, and 124 to 130; these read GLR and WSFISSS.

It belongs to the bacterial CoaD family. Homohexamer. Mg(2+) serves as cofactor.

It is found in the cytoplasm. The catalysed reaction is (R)-4'-phosphopantetheine + ATP + H(+) = 3'-dephospho-CoA + diphosphate. It participates in cofactor biosynthesis; coenzyme A biosynthesis; CoA from (R)-pantothenate: step 4/5. Its function is as follows. Reversibly transfers an adenylyl group from ATP to 4'-phosphopantetheine, yielding dephospho-CoA (dPCoA) and pyrophosphate. The chain is Phosphopantetheine adenylyltransferase from Cronobacter sakazakii (strain ATCC BAA-894) (Enterobacter sakazakii).